The sequence spans 245 residues: tRNA (guanine-N(7)-)-methyltransferase (245 aa).

S-adenosyl-L-methionine contacts are provided by Glu-69, Glu-94, Asp-121, and Asp-144. Asp-144 is a catalytic residue. Substrate-binding positions include Lys-148, Asp-180, and 217–220 (TKFE). Residues 200–225 (NLSSSGDYVPRPENRPKTKFERRGEG) are disordered. A compositionally biased stretch (basic and acidic residues) spans 209–225 (PRPENRPKTKFERRGEG).

It belongs to the class I-like SAM-binding methyltransferase superfamily. TrmB family.

The enzyme catalyses guanosine(46) in tRNA + S-adenosyl-L-methionine = N(7)-methylguanosine(46) in tRNA + S-adenosyl-L-homocysteine. Its pathway is tRNA modification; N(7)-methylguanine-tRNA biosynthesis. Catalyzes the formation of N(7)-methylguanine at position 46 (m7G46) in tRNA. The protein is tRNA (guanine-N(7)-)-methyltransferase of Idiomarina loihiensis (strain ATCC BAA-735 / DSM 15497 / L2-TR).